Reading from the N-terminus, the 313-residue chain is MSKMMVFTGNANPDLARRVVRQLHIPLGDVSVGKFSDGEISVEINENVRGKDVFLIQPTCAPTNDNLMELVVMADAFRRSSATRITAVIPYFGYARQDRRPRSARVAISAKVVADMLTVVGVNRVLTVDLHADQIQGFFDIPVDNIYGSPVLVDDIEDQRFENLMIVSPDIGGVVRARAVAKSLGVDLAIIDKRRPKANQSEVMHIIGDVEGRTCVLVDDMVDTAGTLGHAAKALKEHGAAKVIAYCTHPVLSGRAIENIEKSVLDELVVTNTIPLSAAAQACGRIRQLDIAPVVAEAMRRISNEESISAMFR.

ATP is bound by residues 37–39 and 96–97; these read DGE and RQ. Positions 131 and 170 each coordinate Mg(2+). Lysine 193 is an active-site residue. Residues arginine 195, aspartate 219, and 223-227 each bind D-ribose 5-phosphate; that span reads DTAGT.

Belongs to the ribose-phosphate pyrophosphokinase family. Class I subfamily. In terms of assembly, homohexamer. Mg(2+) serves as cofactor.

The protein resides in the cytoplasm. The catalysed reaction is D-ribose 5-phosphate + ATP = 5-phospho-alpha-D-ribose 1-diphosphate + AMP + H(+). It functions in the pathway metabolic intermediate biosynthesis; 5-phospho-alpha-D-ribose 1-diphosphate biosynthesis; 5-phospho-alpha-D-ribose 1-diphosphate from D-ribose 5-phosphate (route I): step 1/1. In terms of biological role, involved in the biosynthesis of the central metabolite phospho-alpha-D-ribosyl-1-pyrophosphate (PRPP) via the transfer of pyrophosphoryl group from ATP to 1-hydroxyl of ribose-5-phosphate (Rib-5-P). This chain is Ribose-phosphate pyrophosphokinase, found in Pseudomonas aeruginosa (strain ATCC 15692 / DSM 22644 / CIP 104116 / JCM 14847 / LMG 12228 / 1C / PRS 101 / PAO1).